The primary structure comprises 512 residues: Tyrosine-protein kinase Lyn (512 aa).

Residues 1-50 (MGCIKSKRKDNLNDDGVDMKTQPVRNTDRTIYVRDPTSNKQQRPVPESQL) form a disordered region. G2 is lipidated: N-myristoyl glycine. Residue C3 is the site of S-palmitoyl cysteine attachment. An SH3 domain is found at 63–123 (EQGDIVVALY…PSNYVAKVNT (61 aa)). The SH2 domain occupies 129–226 (WFFKDITRKD…GLCRRLEKAC (98 aa)). Residue Y193 is modified to Phosphotyrosine. The residue at position 228 (S228) is a Phosphoserine. Positions 247-501 (IKLVKKLGAG…YLQSVLDDFY (255 aa)) constitute a Protein kinase domain. ATP is bound by residues 253–261 (LGAGQFGEV) and K275. Phosphotyrosine occurs at positions 306 and 316. The Proton acceptor role is filled by D367. The residue at position 397 (Y397) is a Phosphotyrosine; by autocatalysis. Residues Y460 and Y473 each carry the phosphotyrosine modification. Y508 carries the phosphotyrosine; by autocatalysis, CSK and MATK modification.

The protein belongs to the protein kinase superfamily. Tyr protein kinase family. SRC subfamily. As to quaternary structure, interacts with TEC. Interacts (via SH2 domain) with FLT3 (tyrosine phosphorylated). Interacts with LIME1 and with CD79A upon activation of the B-cell antigen receptor. Interacts with the B-cell receptor complex. Interacts with phosphorylated THEMIS2. Interacts with EPOR. Interacts with MS4A2/FCER1B. Interaction (via the SH2 and SH3 domains) with MUC1 is stimulated by IL7 and the subsequent phosphorylation increases the binding between MUC1 and CTNNB1/beta-catenin. Interacts with ADAM15. Interacts with NDFIP2 and more weakly with NDFIP1. Interacts with FASLG. Interacts with KIT. Interacts with HCLS1. Interacts with FCGR2B. Interacts with FCGR1A; the interaction may be indirect. Interacts with CD19, CD22, CD79A and CD79B. Interacts (via SH3 domain) with CBLC, PPP1R15A and PDE4A. Interacts with TGFB1I1. Interacts (via SH3 domain) with PIK3R1, the regulatory subunit of phosphatidylinositol 3-kinase; this interaction enhances phosphatidylinositol 3-kinase activity. Interacts with CSF2RB, the common subunit of the IL3, IL5 and CSF2 receptors. Interacts with PAG1; identified in a complex with PAG1 and STAT3. Interacts with ABL1. Interacts with PTPN6/SHP-1. Interacts (via SH3 domain) with SCIMP (via proline-rich region). This interaction facilitates the phosphorylation of SCIMP 'Tyr-96', which enhances binding of SCIMP to TLR4, and consequently the phosphorylation of TLR4 in response to stimulation by lipopolysaccharide in macrophages. Interacts with LPXN (via LD motif 3) and the interaction is induced upon B-cell antigen receptor (BCR) activation. Interacts (via SH3-domain) with ANKRD54 (via ankyrin repeat region) in an activation-independent status of LYN. Forms a multiprotein complex with ANKRD54 and HCLS1. Interacts (via SH2 and SH3 domains) with UNC119; leading to LYN activation. Interacts with CD36. Interacts with LYN. Interacts with SKAP1 and FYB1; this interaction promotes the phosphorylation of CLNK. Interacts with BCAR1/CAS and NEDD9/HEF1. Ubiquitinated. Ubiquitination is SH3-dependent. In terms of processing, autophosphorylated. Phosphorylated on tyrosine residues in response to KIT signaling. Phosphorylation at Tyr-397 is required for optimal activity. Phosphorylation at Tyr-508 inhibits kinase activity. Phosphorylated at Tyr-508 by CSK. Dephosphorylated by PTPRC/CD45. Becomes rapidly phosphorylated upon activation of the B-cell receptor and the immunoglobulin receptor FCGR1A. Phosphorylated in response to integrin ITGB1 in B-cells. As to expression, detected in spleen (at protein level). Expressed predominantly in B-lymphoid and myeloid cells.

It localises to the cell membrane. Its subcellular location is the nucleus. The protein localises to the cytoplasm. It is found in the perinuclear region. The protein resides in the golgi apparatus. It localises to the membrane. The catalysed reaction is L-tyrosyl-[protein] + ATP = O-phospho-L-tyrosyl-[protein] + ADP + H(+). With respect to regulation, subject to autoinhibition, mediated by intramolecular interactions between the SH2 domain and the C-terminal phosphotyrosine. Phosphorylation at Tyr-397 is required for optimal activity. Phosphorylated by CSK at Tyr-508; phosphorylation at Tyr-508 inhibits kinase activity. Kinase activity is modulated by dephosphorylation by PTPRC/CD45. Non-receptor tyrosine-protein kinase that transmits signals from cell surface receptors and plays an important role in the regulation of innate and adaptive immune responses, hematopoiesis, responses to growth factors and cytokines, integrin signaling, but also responses to DNA damage and genotoxic agents. Functions primarily as negative regulator, but can also function as activator, depending on the context. Required for the initiation of the B-cell response, but also for its down-regulation and termination. Plays an important role in the regulation of B-cell differentiation, proliferation, survival and apoptosis, and is important for immune self-tolerance. Acts downstream of several immune receptors, including the B-cell receptor, CD79A, CD79B, CD5, CD19, CD22, FCER1, FCGR2, FCGR1A, TLR2 and TLR4. Plays a role in the inflammatory response to bacterial lipopolysaccharide. Mediates the responses to cytokines and growth factors in hematopoietic progenitors, platelets, erythrocytes, and in mature myeloid cells, such as dendritic cells, neutrophils and eosinophils. Acts downstream of EPOR, KIT, MPL, the chemokine receptor CXCR4, as well as the receptors for IL3, IL5 and CSF2. Plays an important role in integrin signaling. Regulates cell proliferation, survival, differentiation, migration, adhesion, degranulation, and cytokine release. Involved in the regulation of endothelial activation, neutrophil adhesion and transendothelial migration. Down-regulates signaling pathways by phosphorylation of immunoreceptor tyrosine-based inhibitory motifs (ITIM), that then serve as binding sites for phosphatases, such as PTPN6/SHP-1, PTPN11/SHP-2 and INPP5D/SHIP-1, that modulate signaling by dephosphorylation of kinases and their substrates. Phosphorylates LIME1 in response to CD22 activation. Phosphorylates BTK, CBL, CD5, CD19, CD72, CD79A, CD79B, CSF2RB, DOK1, HCLS1, LILRB3/PIR-B, MS4A2/FCER1B, SYK and TEC. Promotes phosphorylation of SIRPA, PTPN6/SHP-1, PTPN11/SHP-2 and INPP5D/SHIP-1. Required for rapid phosphorylation of FER in response to FCER1 activation. Mediates KIT phosphorylation. Acts as an effector of EPOR (erythropoietin receptor) in controlling KIT expression and may play a role in erythroid differentiation during the switch between proliferation and maturation. Depending on the context, activates or inhibits several signaling cascades. Regulates phosphatidylinositol 3-kinase activity and AKT1 activation. Regulates activation of the MAP kinase signaling cascade, including activation of MAP2K1/MEK1, MAPK1/ERK2, MAPK3/ERK1, MAPK8/JNK1 and MAPK9/JNK2. Mediates activation of STAT5A and/or STAT5B. Phosphorylates LPXN on 'Tyr-72'. Kinase activity facilitates TLR4-TLR6 heterodimerization and signal initiation. Phosphorylates SCIMP on 'Tyr-96'; this enhances binding of SCIMP to TLR4, promoting the phosphorylation of TLR4, and a selective cytokine response to lipopolysaccharide in macrophages. Phosphorylates CLNK. Phosphorylates BCAR1/CAS and NEDD9/HEF1. The chain is Tyrosine-protein kinase Lyn (Lyn) from Rattus norvegicus (Rat).